The chain runs to 446 residues: Ribosomal protein uS12 methylthiotransferase RimO (446 aa).

The MTTase N-terminal domain occupies 10–122 (KTLHMVSLGC…IDELVNEKRS (113 aa)). Cysteine 19, cysteine 53, cysteine 85, cysteine 154, cysteine 158, and cysteine 161 together coordinate [4Fe-4S] cluster. One can recognise a Radical SAM core domain in the interval 140–369 (TGSSYHAYVK…GEIISQTTQE (230 aa)). The TRAM domain occupies 372 to 446 (ESEVGKTFEV…GDKLLATVIK (75 aa)).

The protein belongs to the methylthiotransferase family. RimO subfamily. [4Fe-4S] cluster serves as cofactor.

The protein localises to the cytoplasm. The catalysed reaction is L-aspartate(89)-[ribosomal protein uS12]-hydrogen + (sulfur carrier)-SH + AH2 + 2 S-adenosyl-L-methionine = 3-methylsulfanyl-L-aspartate(89)-[ribosomal protein uS12]-hydrogen + (sulfur carrier)-H + 5'-deoxyadenosine + L-methionine + A + S-adenosyl-L-homocysteine + 2 H(+). Its function is as follows. Catalyzes the methylthiolation of an aspartic acid residue of ribosomal protein uS12. The chain is Ribosomal protein uS12 methylthiotransferase RimO from Aliarcobacter butzleri (strain RM4018) (Arcobacter butzleri).